The primary structure comprises 570 residues: Proline--tRNA ligase (570 aa).

This sequence belongs to the class-II aminoacyl-tRNA synthetase family. ProS type 1 subfamily. Homodimer.

The protein localises to the cytoplasm. It carries out the reaction tRNA(Pro) + L-proline + ATP = L-prolyl-tRNA(Pro) + AMP + diphosphate. Its function is as follows. Catalyzes the attachment of proline to tRNA(Pro) in a two-step reaction: proline is first activated by ATP to form Pro-AMP and then transferred to the acceptor end of tRNA(Pro). As ProRS can inadvertently accommodate and process non-cognate amino acids such as alanine and cysteine, to avoid such errors it has two additional distinct editing activities against alanine. One activity is designated as 'pretransfer' editing and involves the tRNA(Pro)-independent hydrolysis of activated Ala-AMP. The other activity is designated 'posttransfer' editing and involves deacylation of mischarged Ala-tRNA(Pro). The misacylated Cys-tRNA(Pro) is not edited by ProRS. The chain is Proline--tRNA ligase from Geobacter metallireducens (strain ATCC 53774 / DSM 7210 / GS-15).